The chain runs to 149 residues: MKTVTLFSDGSCLNNPGAGGWAYILEFNGAVKKDSGGAAMTTNNQMELTAVIEGLKALKEPCEVRLFTDSSYVANAVNSWLDGWVKKNFIGSDKKPVKNIELWQEYLRVSRPHKVTASWIKAHNGHPQNEECDTMAREKATKFQNEADI.

Positions 1-141 constitute an RNase H type-1 domain; it reads MKTVTLFSDG…CDTMAREKAT (141 aa). Residues aspartate 9, glutamate 47, aspartate 69, and aspartate 133 each contribute to the Mg(2+) site.

The protein belongs to the RNase H family. Monomer. Mg(2+) is required as a cofactor.

It is found in the cytoplasm. The enzyme catalyses Endonucleolytic cleavage to 5'-phosphomonoester.. Its function is as follows. Endonuclease that specifically degrades the RNA of RNA-DNA hybrids. The sequence is that of Ribonuclease H from Campylobacter curvus (strain 525.92).